The primary structure comprises 452 residues: MEKQYLTVTALTRYIKTKIEYDPHLQSVWLKGEISNFKNHSRGHMYFTLKDENARIAAVMFAGHNRNIKFRPENGMKVLVKGKISVYEASGSYQIYIQDMQPDGIGNLHLAYEQLKVRLEEEGLFSQVYKKTIPPYAKTIGVITSPTGAAIRDIITTIKRRYPIGNVIVFPVLVQGESAAPSIVQAIRTANEMEEIDVLIVGRGGGSIEELWAFNEEMVARAIFKSEIPIISAVGHETDFTIADFVADLRAPTPTAAAELAAPNIIELQEKVLQRTLRLQRAMRELVHKKEEKLQVLQKSYAFRYPRQVYEQKEEQLDRALEQLVLAKERYIDKKVNQLKQLSFYLEKHHPSQKIMQTKVAVETLQKQLQREMQTLLQAKEFAFVRAAQKLEALSPLKVMMRGYGLVYDEEKQVLKSVKDVSLGDAVSVQLQDGILDCSVSGIEERELNNGK.

The protein belongs to the XseA family. In terms of assembly, heterooligomer composed of large and small subunits.

It localises to the cytoplasm. The catalysed reaction is Exonucleolytic cleavage in either 5'- to 3'- or 3'- to 5'-direction to yield nucleoside 5'-phosphates.. Bidirectionally degrades single-stranded DNA into large acid-insoluble oligonucleotides, which are then degraded further into small acid-soluble oligonucleotides. In Bacillus anthracis (strain A0248), this protein is Exodeoxyribonuclease 7 large subunit.